Here is an 896-residue protein sequence, read N- to C-terminus: Translation initiation factor IF-2 (896 aa).

Residues 46–315 (LAHLNRQHGG…FNKPAQPVER (270 aa)) are disordered. The segment covering 99–247 (SASEEQEREE…RKQQEKEDVH (149 aa)) has biased composition (basic and acidic residues). Basic residues predominate over residues 269-278 (SRKRGKKRRR). Residues 279-288 (KDEESDDTPR) show a composition bias toward basic and acidic residues. Residues 396-565 (PRAPVVTVMG…LLQSEVLDLR (170 aa)) form the tr-type G domain. A G1 region spans residues 405–412 (GHVDHGKT). 405–412 (GHVDHGKT) contributes to the GTP binding site. Residues 430–434 (GITQH) form a G2 region. The tract at residues 451–454 (DTPG) is G3. Residues 451–455 (DTPGH) and 505–508 (NKMD) contribute to the GTP site. Positions 505 to 508 (NKMD) are G4. The G5 stretch occupies residues 541–543 (SAH).

Belongs to the TRAFAC class translation factor GTPase superfamily. Classic translation factor GTPase family. IF-2 subfamily.

The protein resides in the cytoplasm. Its function is as follows. One of the essential components for the initiation of protein synthesis. Protects formylmethionyl-tRNA from spontaneous hydrolysis and promotes its binding to the 30S ribosomal subunits. Also involved in the hydrolysis of GTP during the formation of the 70S ribosomal complex. This is Translation initiation factor IF-2 from Idiomarina loihiensis (strain ATCC BAA-735 / DSM 15497 / L2-TR).